We begin with the raw amino-acid sequence, 225 residues long: uncharacterized protein (225 aa).

The Fe2OG dioxygenase domain maps to 114–219 (DAEAIIMQVY…RLSVTMRRII (106 aa)).

It belongs to the iron/ascorbate-dependent oxidoreductase family.

The protein localises to the cytoplasm. It is found in the nucleus. This is an uncharacterized protein from Schizosaccharomyces pombe (strain 972 / ATCC 24843) (Fission yeast).